Here is a 298-residue protein sequence, read N- to C-terminus: Probable porphobilinogen deaminase (298 aa).

At Cys-241 the chain carries S-(dipyrrolylmethanemethyl)cysteine.

It belongs to the HMBS family. It depends on dipyrromethane as a cofactor.

The catalysed reaction is 4 porphobilinogen + H2O = hydroxymethylbilane + 4 NH4(+). Its pathway is porphyrin-containing compound metabolism; protoporphyrin-IX biosynthesis; coproporphyrinogen-III from 5-aminolevulinate: step 2/4. Tetrapolymerization of the monopyrrole PBG into the hydroxymethylbilane pre-uroporphyrinogen in several discrete steps. In Methanopyrus kandleri (strain AV19 / DSM 6324 / JCM 9639 / NBRC 100938), this protein is Probable porphobilinogen deaminase.